Here is a 722-residue protein sequence, read N- to C-terminus: D-(-)-3-hydroxybutyrate oligomer hydrolase (722 aa).

The segment covering 1–11 has biased composition (polar residues); sequence MQQRHLSQSAH. A disordered region spans residues 1–20; sequence MQQRHLSQSAHSHGHGTRRA. Residues 1 to 36 form the signal peptide; sequence MQQRHLSQSAHSHGHGTRRAHRRNTIAIAVATLAVA. Catalysis depends on S327, which acts as the Charge relay system. The interval 671-697 is disordered; it reads PPSQVVRTTPRGGADTDTVGPRIQPSN.

This sequence belongs to the D-(-)-3-hydroxybutyrate oligomer hydrolase family.

Its subcellular location is the secreted. It catalyses the reaction (3R)-hydroxybutanoate dimer + H2O = 2 (R)-3-hydroxybutanoate + H(+). Its pathway is lipid metabolism; butanoate metabolism. In terms of biological role, participates in the degradation of poly-3-hydroxybutyrate (PHB). It works downstream of poly(3-hydroxybutyrate) depolymerase, hydrolyzing D(-)-3-hydroxybutyrate oligomers of various length (3HB-oligomers) into 3HB-monomers. The protein is D-(-)-3-hydroxybutyrate oligomer hydrolase of Cupriavidus metallidurans (strain ATCC 43123 / DSM 2839 / NBRC 102507 / CH34) (Ralstonia metallidurans).